The primary structure comprises 90 residues: DNA-directed RNA polymerase subunit omega (90 aa).

Positions 70-90 (QEQQEQEAAELAAVSSIMHNR) are disordered.

This sequence belongs to the RNA polymerase subunit omega family. As to quaternary structure, the RNAP catalytic core consists of 2 alpha, 1 beta, 1 beta' and 1 omega subunit. When a sigma factor is associated with the core the holoenzyme is formed, which can initiate transcription.

It catalyses the reaction RNA(n) + a ribonucleoside 5'-triphosphate = RNA(n+1) + diphosphate. Functionally, promotes RNA polymerase assembly. Latches the N- and C-terminal regions of the beta' subunit thereby facilitating its interaction with the beta and alpha subunits. The sequence is that of DNA-directed RNA polymerase subunit omega from Vibrio cholerae serotype O1 (strain ATCC 39541 / Classical Ogawa 395 / O395).